The sequence spans 973 residues: MKFSYISSLPKGHNHICCKQAGRFLSSQADLKKYSESLCLPKTSFPIKPNVKGNNEKYFKSITSDLYEWQKENLNKEDSFVLLDGPPFANGRLHIGHALNKILKDIINRWQLLKGRSVHYVPGWDCHGLPIESKAIKANAERKSSLEIRKIAKDFANSAVQEQLMMFQRMAVMGDWPSRYITMSDKFEIAELKVFLSLLQKDLIFRQNKPVYWSSSSRSALAESEIEYDDNHVSTSIYFTFPVNSFSIDGCEYNNVKALVWTTTPWTIPSNLALSYHPEINYGLYQHNNSIYLMSDNLVPNLDFMQGAKRLASCPSDIISSFTYENPLLPKQSFPFLQSNYVTNDIGTGIVHVAPGHGMEDYLLGLENNLRPFSPLDDYGRYTKEALDGSLEGLEVLGDGGKKVISIMKNQNMIVKVSPYKHRYPYDWRTHKPLILRATPQWFISLENERKTAIKALDSVKMIPPNSRARLLGFLNGRPEWCISRQRAWGLPIPVLYEKGTKIPLLTVKSVSYIIEKMEVEGVDSWFNDTENNGHAQWVHPDYRNKEYIRGTETLDVWFDSGTSWTTIAPRKNKPLIDLCLEGSDQHRGWFQSLLLTYTAYQSKPEAPFSTLFTHGFIFDERGQKQSKSLGNVTDPEDVINGKLLKGKKLPYGVDLLRLWVASCDSTNDTNLGPNILTQVGESLKKWRLTSRFCLGNLHDWNTSSSVDVGELRGIDKLALVQLDKFQTEIRELYESYSINKVVHHLNYFMNSFLSSTYFDAVKDRLYADLPNSVSRRSVQTVLYHSLLTLIWAISPITPLLAQEIWQSLPDSYLNSSYQTPFHAGETHLISSLRSKVDLLDRKFLIKEYLVLQQLKYSINLLITAARENLTIKNSLEAYVVIKSKSQSLLSFLKNYSSDLPFLFNTSKVFINEIPENLKLASVTQPEVQLDYGVANISLFFSNQQKCLRCWMHTAHEDGLCDRCESVLAQLKR.

A 'HIGH' region motif is present at residues 87–97 (PFANGRLHIGH). A 'KMSKS' region motif is present at residues 625–629 (KQSKS). K628 is an ATP binding site.

Belongs to the class-I aminoacyl-tRNA synthetase family.

It is found in the cytoplasm. Its subcellular location is the mitochondrion matrix. The enzyme catalyses tRNA(Ile) + L-isoleucine + ATP = L-isoleucyl-tRNA(Ile) + AMP + diphosphate. The sequence is that of Isoleucine--tRNA ligase, mitochondrial (ism1) from Schizosaccharomyces pombe (strain 972 / ATCC 24843) (Fission yeast).